We begin with the raw amino-acid sequence, 231 residues long: tRNA (guanine-N(1)-)-methyltransferase (231 aa).

Residues Gly112 and Ile132–Leu137 each bind S-adenosyl-L-methionine.

It belongs to the RNA methyltransferase TrmD family. Homodimer.

The protein localises to the cytoplasm. It carries out the reaction guanosine(37) in tRNA + S-adenosyl-L-methionine = N(1)-methylguanosine(37) in tRNA + S-adenosyl-L-homocysteine + H(+). Its function is as follows. Specifically methylates guanosine-37 in various tRNAs. The polypeptide is tRNA (guanine-N(1)-)-methyltransferase (Sulfurimonas denitrificans (strain ATCC 33889 / DSM 1251) (Thiomicrospira denitrificans (strain ATCC 33889 / DSM 1251))).